A 252-amino-acid polypeptide reads, in one-letter code: Probable transcriptional regulatory protein CE1776 (252 aa).

The tract at residues 1–22 is disordered; it reads MAGHSKWATTKHKKAANDAKRG.

The protein belongs to the TACO1 family.

The protein localises to the cytoplasm. The protein is Probable transcriptional regulatory protein CE1776 of Corynebacterium efficiens (strain DSM 44549 / YS-314 / AJ 12310 / JCM 11189 / NBRC 100395).